The sequence spans 313 residues: E3 ubiquitin-protein ligase RNF126 (313 aa).

An N-acetylalanine modification is found at A2. S5 is subject to Phosphoserine. Residues 5-100 (SPQPGRYFCH…FEIPTFPPGA (96 aa)) form a required for interaction with BAG6 region. Residues C13, C16, C29, and C32 each contribute to the Zn(2+) site. The C4-type zinc-finger motif lies at 13–32 (CHCCSVEIVPRLPDYICPRC). Disordered stretches follow at residues 42–63 (EETR…QNRQ) and 95–128 (TFPP…RQPR). A compositionally biased stretch (polar residues) spans 47–63 (TENGSAPSTAPTDQNRQ). The span at 103–116 (DDGRDPESRREREH) shows a compositional bias: basic and acidic residues. Basic residues predominate over residues 117–128 (QSRHRYGARQPR). The interval 202–306 (TGPPPADKEK…SSSSSSSPSN (105 aa)) is sufficient for interaction with AICDA. The RING-type zinc finger occupies 231–272 (CPVCKEDYALGESVRQLPCNHLFHDSCIVPWLEQHDSCPVCR). The tract at residues 279–313 (NTATNPPGLTGVGFSSSSSSSSSSSPSNENATSNS) is disordered. A compositionally biased stretch (low complexity) spans 293–313 (SSSSSSSSSSSPSNENATSNS).

As to quaternary structure, interacts with CCDC50, EGFR, FLT3 and SCAMP3. Interacts with BAG6 (via ubiquitin-like domain); required for BAG6-dependent ubiquitination of proteins mislocalized to the cytosol. Interacts with CDKN1A. Interacts with AICDA. In terms of processing, ubiquitinated. May undergo autoubiquitination. Detected in B-cells (at protein level).

The protein localises to the cytoplasm. It localises to the nucleus. The catalysed reaction is S-ubiquitinyl-[E2 ubiquitin-conjugating enzyme]-L-cysteine + [acceptor protein]-L-lysine = [E2 ubiquitin-conjugating enzyme]-L-cysteine + N(6)-ubiquitinyl-[acceptor protein]-L-lysine.. It functions in the pathway protein modification; protein ubiquitination. In terms of biological role, E3 ubiquitin-protein ligase that mediates ubiquitination oF target proteins. Depending on the associated E2 ligase, mediates 'Lys-27'-, 'Lys-29'-, 'Lys-48'- and/or 'Lys-63'-linked polyubiquitination of substrates. Part of a BAG6-dependent quality control process ensuring that proteins of the secretory pathway that are mislocalized to the cytosol are degraded by the proteasome. Probably acts by providing the ubiquitin ligase activity associated with the BAG6 complex and be responsible for ubiquitination of the hydrophobic mislocalized proteins and their targeting to the proteasome. May also play a role in the endosomal recycling of IGF2R, the cation-independent mannose-6-phosphate receptor. May play a role in the endosomal sorting and degradation of several membrane receptors including EGFR, FLT3, MET and CXCR4, by mediating their ubiquitination. By ubiquitinating CDKN1A/p21 and targeting it for degradation, may also promote cell proliferation. May monoubiquitinate AICDA. Acts as a regulator of DNA repair by mediating 'Lys-27'- and 'Lys-29'-linked polyubiquitination of MRE11, thereby promoting the exonuclease activity of MRE11. This chain is E3 ubiquitin-protein ligase RNF126, found in Mus musculus (Mouse).